The following is a 150-amino-acid chain: Putative antitoxin VapB45 (150 aa).

The tract at residues 124–150 (AQRPVAAGRPRPRPQRPVSDRVSDQRR) is disordered. Residues 141–150 (VSDRVSDQRR) are compositionally biased toward basic and acidic residues.

Belongs to the phD/YefM antitoxin family.

Possibly the antitoxin component of a type II toxin-antitoxin (TA) system. Its cognate toxin is VapC45 (Potential). The chain is Putative antitoxin VapB45 (vapB45) from Mycobacterium tuberculosis (strain CDC 1551 / Oshkosh).